A 220-amino-acid chain; its full sequence is Small ribosomal subunit protein uS3c (220 aa).

Residues 43–120 enclose the KH type-2 domain; that stretch reads IQHYVEKNTR…RLNIAIIRVA (78 aa).

Belongs to the universal ribosomal protein uS3 family. In terms of assembly, part of the 30S ribosomal subunit.

It is found in the plastid. Its subcellular location is the chloroplast. This chain is Small ribosomal subunit protein uS3c (rps3), found in Piper cenocladum (Ant piper).